We begin with the raw amino-acid sequence, 734 residues long: Homoaconitase, mitochondrial (734 aa).

Residues 1–25 constitute a mitochondrion transit peptide; sequence MGASNLLRFGAVTRISTPLLSRRSL. Residues C367, C427, and C430 each coordinate [4Fe-4S] cluster.

This sequence belongs to the aconitase/IPM isomerase family. [4Fe-4S] cluster is required as a cofactor.

The protein localises to the mitochondrion. The enzyme catalyses (2R,3S)-homoisocitrate = cis-homoaconitate + H2O. Its pathway is amino-acid biosynthesis; L-lysine biosynthesis via AAA pathway; L-alpha-aminoadipate from 2-oxoglutarate: step 3/5. Functionally, catalyzes the reversible hydration of cis-homoaconitate to (2R,3S)-homoisocitrate, a step in the alpha-aminoadipate pathway for lysine biosynthesis. The sequence is that of Homoaconitase, mitochondrial (LYS4) from Mycosarcoma maydis (Corn smut fungus).